A 394-amino-acid chain; its full sequence is D-aspartate oxidase (394 aa).

FAD-binding residues include I19, A57, S58, and G62. Residues 190–210 traverse the membrane as a helical segment; the sequence is LIGHEPTAGVIVCVGLGALVL. N-linked (GlcNAc...) asparagine glycosylation occurs at N214. 3 residues coordinate FAD: R342, G373, and Q375.

This sequence belongs to the DAMOX/DASOX family. FAD serves as cofactor.

The protein resides in the membrane. It carries out the reaction D-aspartate + O2 + H2O = oxaloacetate + H2O2 + NH4(+). Selectively catalyzes the oxidative deamination of acidic amino acids. Protects the organism from the toxicity of D-amino acids. Enables the organism to utilize D-amino acids as a source of nutrients. Enables the organism to utilize D-aspartate and D-asparagine as a source of nitrogen. May play a role in its interaction with the host. In Cryptococcus neoformans var. grubii serotype A (strain H99 / ATCC 208821 / CBS 10515 / FGSC 9487) (Filobasidiella neoformans var. grubii), this protein is D-aspartate oxidase.